We begin with the raw amino-acid sequence, 438 residues long: MTVNPTHTALWPAPHASGAVDATVHVPGSKSVTNRALVLAALASEPGWLRRPLRSRDTLLMAEALRTLGVEIEEGVGPEGTGEFWRVIPAGLRGPATVDVGNAGTVMRFLPPVATLADGAVRFDGDPRSYERPLHGVIDALRVLGARIDDDGRGALPLTVHGGGALEGGPVEIDASSSSQFVSALLLSGPRFNQGVEVRHTGSALPSMPHIRMTVDMLRAVGAQVDTPESGGEPNVWRVTPGALLGRDLTVEPDLSNAQPFLAAALVTGGKVVIPDWPSRTTQPGDRLREIFTDMGGSCELTDFGLVFTGSGAIHGIDVDLSEVGELTPGIAAVAALADSPSTLRGVAHLRLHETDRLAALTKEINELGGDVTETADGLHIRPRRLHGGVFHTYDDHRMATAGAVLGLAVEGVQIENVATTAKTLPDFPDLWTGMLGA.

Residues lysine 30, serine 31, and arginine 35 each coordinate 3-phosphoshikimate. A phosphoenolpyruvate-binding site is contributed by lysine 30. Residues glycine 104 and arginine 132 each contribute to the phosphoenolpyruvate site. 3-phosphoshikimate is bound by residues serine 178, serine 179, glutamine 180, serine 207, glutamate 326, and histidine 353. Position 180 (glutamine 180) interacts with phosphoenolpyruvate. Glutamate 326 serves as the catalytic Proton acceptor. Phosphoenolpyruvate contacts are provided by arginine 357, arginine 398, and lysine 423.

It belongs to the EPSP synthase family. As to quaternary structure, monomer.

The protein resides in the cytoplasm. It carries out the reaction 3-phosphoshikimate + phosphoenolpyruvate = 5-O-(1-carboxyvinyl)-3-phosphoshikimate + phosphate. It functions in the pathway metabolic intermediate biosynthesis; chorismate biosynthesis; chorismate from D-erythrose 4-phosphate and phosphoenolpyruvate: step 6/7. Catalyzes the transfer of the enolpyruvyl moiety of phosphoenolpyruvate (PEP) to the 5-hydroxyl of shikimate-3-phosphate (S3P) to produce enolpyruvyl shikimate-3-phosphate and inorganic phosphate. The polypeptide is 3-phosphoshikimate 1-carboxyvinyltransferase 1 (Streptomyces coelicolor (strain ATCC BAA-471 / A3(2) / M145)).